A 115-amino-acid chain; its full sequence is NADH-ubiquinone oxidoreductase chain 3 (115 aa).

3 helical membrane passes run 4–24, 55–75, and 84–104; these read LLTM…AFWL, FFLV…LLPI, and INTM…GLAY.

The protein belongs to the complex I subunit 3 family. Core subunit of respiratory chain NADH dehydrogenase (Complex I) which is composed of 45 different subunits. Interacts with TMEM186. Interacts with TMEM242.

The protein resides in the mitochondrion inner membrane. The catalysed reaction is a ubiquinone + NADH + 5 H(+)(in) = a ubiquinol + NAD(+) + 4 H(+)(out). Core subunit of the mitochondrial membrane respiratory chain NADH dehydrogenase (Complex I) which catalyzes electron transfer from NADH through the respiratory chain, using ubiquinone as an electron acceptor. Essential for the catalytic activity of complex I. This Neotoma lepida (Desert woodrat) protein is NADH-ubiquinone oxidoreductase chain 3.